Reading from the N-terminus, the 320-residue chain is Acetyl-coenzyme A carboxylase carboxyl transferase subunit alpha (320 aa).

The 255-residue stretch at 41–295 folds into the CoA carboxyltransferase C-terminal domain; the sequence is SIEEKAAQAL…GDAIAGALND (255 aa).

It belongs to the AccA family. Acetyl-CoA carboxylase is a heterohexamer composed of biotin carboxyl carrier protein (AccB), biotin carboxylase (AccC) and two subunits each of ACCase subunit alpha (AccA) and ACCase subunit beta (AccD).

It localises to the cytoplasm. It carries out the reaction N(6)-carboxybiotinyl-L-lysyl-[protein] + acetyl-CoA = N(6)-biotinyl-L-lysyl-[protein] + malonyl-CoA. The protein operates within lipid metabolism; malonyl-CoA biosynthesis; malonyl-CoA from acetyl-CoA: step 1/1. Its function is as follows. Component of the acetyl coenzyme A carboxylase (ACC) complex. First, biotin carboxylase catalyzes the carboxylation of biotin on its carrier protein (BCCP) and then the CO(2) group is transferred by the carboxyltransferase to acetyl-CoA to form malonyl-CoA. This is Acetyl-coenzyme A carboxylase carboxyl transferase subunit alpha from Nitrobacter winogradskyi (strain ATCC 25391 / DSM 10237 / CIP 104748 / NCIMB 11846 / Nb-255).